The following is a 334-amino-acid chain: MKTQIQELRTQALADIESAGDAKAIDELNIRYLGRKGLVNDLMKGMAKVPADEKPLIGRLANELKNDLQDAFAKAVEKFGSGKEAGDVVDVTLPGRPRKVGGLHPLTTINLEICDIFTRLGFDIAQGPEVELDYYNFEALNFPKDHPARDMQDTFFVSDNVVLRTHTSPMQVRTMEKQKPPVRVIAPGKVYRCDSDITHTPMFAQVEGLVVDKGISFADLKGVLTTLVHQIFDDKTPLRFRPSFFPFTEPSAEVDIGCVMCKGSGCRVCSHTGWLEILGSGMVHPRVFEFVGYDTSEISGFAFGMGVERIAMLKYGIDDIRKYYENDLRFLNQF.

Glu-249 serves as a coordination point for Mg(2+).

The protein belongs to the class-II aminoacyl-tRNA synthetase family. Phe-tRNA synthetase alpha subunit type 1 subfamily. Tetramer of two alpha and two beta subunits. It depends on Mg(2+) as a cofactor.

It localises to the cytoplasm. The catalysed reaction is tRNA(Phe) + L-phenylalanine + ATP = L-phenylalanyl-tRNA(Phe) + AMP + diphosphate + H(+). In Desulfatibacillum aliphaticivorans, this protein is Phenylalanine--tRNA ligase alpha subunit.